Here is a 102-residue protein sequence, read N- to C-terminus: uncharacterized protein (102 aa).

Residues 1–71 (MKRMIRSHGR…GSANETSACT (71 aa)) form a disordered region. Residues 1-79 (MKRMIRSHGR…CTRTDHQKAD (79 aa)) are Extracellular-facing. Residues 56 to 71 (SSGTRRGSANETSACT) are compositionally biased toward polar residues. An N-linked (GlcNAc...) asparagine; by host glycan is attached at asparagine 65. The chain crosses the membrane as a helical span at residues 80 to 97 (IGLWFMFLVFGLCSWLAM). The Cytoplasmic segment spans residues 98-102 (RYRAQ).

The protein belongs to the HHV-5 UL15A protein family.

It is found in the host membrane. This is an uncharacterized protein from Human cytomegalovirus (strain AD169) (HHV-5).